Here is a 375-residue protein sequence, read N- to C-terminus: 4-hydroxy-3-methylbut-2-en-1-yl diphosphate synthase (flavodoxin) (375 aa).

Residues C270, C273, C305, and E312 each coordinate [4Fe-4S] cluster.

Belongs to the IspG family. [4Fe-4S] cluster serves as cofactor.

It catalyses the reaction (2E)-4-hydroxy-3-methylbut-2-enyl diphosphate + oxidized [flavodoxin] + H2O + 2 H(+) = 2-C-methyl-D-erythritol 2,4-cyclic diphosphate + reduced [flavodoxin]. It participates in isoprenoid biosynthesis; isopentenyl diphosphate biosynthesis via DXP pathway; isopentenyl diphosphate from 1-deoxy-D-xylulose 5-phosphate: step 5/6. In terms of biological role, converts 2C-methyl-D-erythritol 2,4-cyclodiphosphate (ME-2,4cPP) into 1-hydroxy-2-methyl-2-(E)-butenyl 4-diphosphate. In Yersinia pestis (strain Pestoides F), this protein is 4-hydroxy-3-methylbut-2-en-1-yl diphosphate synthase (flavodoxin).